Reading from the N-terminus, the 174-residue chain is Centrosomal protein 20 (174 aa).

The tract at residues 1 to 104 (MATVAELKAV…AFEESKDNTI (104 aa)) is necessary and sufficient for homooligomerization and localization to centrosomes and pericentriolar satellites. Residues 49 to 81 (ENLLINELIREYLEFNKYKYTASVLIAESGQPV) enclose the LisH domain. Residues 129–174 (GPSLQPSDPSLGRQPSRRKPMDDHLRKEEQKSTNIEDLHVSQAVNR) are disordered. Serine 144 carries the post-translational modification Phosphoserine. Residues 147-167 (KPMDDHLRKEEQKSTNIEDLH) are compositionally biased toward basic and acidic residues.

This sequence belongs to the CEP43 family. Homooligomer; probably required for localization to centrosomes. Forms a complex with KIAA0753/OFIP and OFD1; within this complex may stabilize the interaction between OFD1 and KIAA0753/OFIP. Interacts with PCM1; this interaction may be mediated by KIAA0753/OFIP. Interacts with PLK1 in later G1, S, G2 and M phases of the cell cycle; this interaction recruits PLK1 to centrosomes. As to expression, widely expressed. Detected in brain, heart, kidney, liver, lung, skeletal muscle, placenta and intestine.

It localises to the cytoplasm. Its subcellular location is the cytoskeleton. It is found in the microtubule organizing center. The protein localises to the centrosome. The protein resides in the centriole. It localises to the cell projection. Its subcellular location is the cilium. It is found in the cilium basal body. The protein localises to the cytoplasmic granule. The protein resides in the centriolar satellite. Involved in the biogenesis of cilia. Required for the recruitment of PLK1 to centrosomes and S phase progression. The polypeptide is Centrosomal protein 20 (Homo sapiens (Human)).